We begin with the raw amino-acid sequence, 453 residues long: NADH-quinone oxidoreductase subunit D (453 aa).

Positions 1 to 21 are enriched in basic and acidic residues; the sequence is MKDTETRPGRHRAPEPAHPEQ. Residues 1-30 form a disordered region; it reads MKDTETRPGRHRAPEPAHPEQPDTTGDTVV.

Belongs to the complex I 49 kDa subunit family. NDH-1 is composed of 14 different subunits. Subunits NuoB, C, D, E, F, and G constitute the peripheral sector of the complex.

The protein resides in the cell membrane. It carries out the reaction a quinone + NADH + 5 H(+)(in) = a quinol + NAD(+) + 4 H(+)(out). In terms of biological role, NDH-1 shuttles electrons from NADH, via FMN and iron-sulfur (Fe-S) centers, to quinones in the respiratory chain. The immediate electron acceptor for the enzyme in this species is believed to be a menaquinone. Couples the redox reaction to proton translocation (for every two electrons transferred, four hydrogen ions are translocated across the cytoplasmic membrane), and thus conserves the redox energy in a proton gradient. This Nocardia farcinica (strain IFM 10152) protein is NADH-quinone oxidoreductase subunit D.